The primary structure comprises 679 residues: MKPYEPKSWVTRVFLVWWLTALSCFFISGRLIYLQLLKGKWLKEKALKQQTVTLKTFQPRRNICDRNGIPLAIDTLAYDVFAHPLYFSISIEEVANKLSPILCIDSLSIQKLLKPTSTGICLASQLPENTGKLIASLRLDGIDLIKHPKRYYPYKEIVGNVIGYVDTSHQGQAGIELSCQESLQLNSPTLTSSIDGRGVLISHQIPKELFIQDNLSLQLTLDLELQKIAYKALKQGLENCKGKRGTVLILDPKTGGILTLVALPSYDPNIYYDFPIERFKPWPVTDLYEPGSTFKPLNIAIALETKAISPEDSFYDEGCIRVGDSIITNNDYNSYKPLPCLPNTYNKIVKLLANSSNVGMVHILERIAPEIYHSWLSKLDLGHAASPLETDLPWASESSLKDINEFVCYEIEPAAASFGQGLAMTPIKLAQLYASLANGGILVKPYLVTGLANAAEDTQKAKGIDLPSYNIRKKNLGNHLSWHKAEPSYLFLKRSGIRVTDLLRHIKAEGRFALPFRKNLLQLFTQDAHRTTELQLEPKAHQPQLLRPTRHAVYATNQSKRVFSHETTKLLLDMLEDVIWNGTGSSCFVEGYRIGGKTGTSQKHTQEGGYSKTKIITSFAAIFPTEDPQYVILTVIDEPNIPLSFGSNTAAPIVKSIIESLIDIKKMKPTIPIIKVKKD.

Residues 13-33 (VFLVWWLTALSCFFISGRLIY) form a helical membrane-spanning segment. Ser-292 serves as the catalytic Acyl-ester intermediate.

It belongs to the transpeptidase family.

The protein resides in the plastid. The protein localises to the chloroplast membrane. It catalyses the reaction Preferential cleavage: (Ac)2-L-Lys-D-Ala-|-D-Ala. Also transpeptidation of peptidyl-alanyl moieties that are N-acyl substituents of D-alanine.. The protein is Peptidoglycan D,D-transpeptidase FtsI homolog (ftsI) of Chlorokybus atmophyticus (Soil alga).